Reading from the N-terminus, the 245-residue chain is Protein crossbronx (245 aa).

The UBC core domain occupies 20–177; it reads QQEYKILAEY…VQESIVESKS (158 aa).

This sequence belongs to the ubiquitin-conjugating enzyme family. FTS subfamily.

The chain is Protein crossbronx (cbx) from Drosophila virilis (Fruit fly).